A 637-amino-acid polypeptide reads, in one-letter code: Protein RRP6-like 1 (637 aa).

The 3'-5' exonuclease domain occupies 118 to 283 (VEEVKDLEDL…YIYDVMRMEL (166 aa)). The region spanning 334–414 (NAVQLSIVAG…RRSMQNAAAF (81 aa)) is the HRDC domain. Residues 553-565 (VDDDDDDDDDESY) are compositionally biased toward acidic residues. The tract at residues 553-624 (VDDDDDDDDD…EDMRRRSEKH (72 aa)) is disordered. Positions 580 to 598 (ETPSKGSPSLTQKPKTCNT) are enriched in polar residues. Residues 602–614 (VLDDDDDSESRED) are compositionally biased toward acidic residues.

Its subcellular location is the nucleus. The protein localises to the nucleoplasm. In terms of biological role, acts as an important epigenetic regulator through multiple silencing mechanisms. Involved in transcriptional gene silencing (TGS). Plays a role for DNA methylation in the RNA-directed DNA methylation (RdDM) pathway. Contributes to the methylation status of the retrotransposon SN1. Required for DNA methylation only at a subset of RdDM target loci. Plays a regulatory role in RdDM through retention of non-coding RNAs (ncRNAs) in normal cells. Helps to retain Pol V-transcribed RNAs in chromatin to enable their scaffold function and is required for genome-wide Pol IV-dependent siRNA (24 nt siRNA) production that may involve retention of Pol IV transcripts. Involved in association with RRP6L2 in the silencing of the solo LTR locus. Controls levels of ncRNAs from the solo LTR locus. Seems to function independently of the RdDM pathway. Functions redundantly with RRP6L2 in the regulation of FLC locus. Participates in the maintenance of trimethylated 'Lys-27' (H3K27me3) at FLC locus via the regulation of antisense long non-coding RNAs (lncRNAs) and the regulation of diverse antisense RNAs derived from the FLC locus. Seems not involved in the exosomal RNA degradation. Can complement the growth defect of a yeast mutant lacking RRP6 exonuclease. The protein is Protein RRP6-like 1 of Arabidopsis thaliana (Mouse-ear cress).